A 385-amino-acid polypeptide reads, in one-letter code: Chaperone protein DnaJ (385 aa).

The region spanning 5 to 70 is the J domain; that stretch reads DFYDVLGVSR…QSRAAYDQFG (66 aa). The CR-type zinc finger occupies 143 to 221; that stretch reads GKKAQVRVPG…CHGAGRVEKE (79 aa). 8 residues coordinate Zn(2+): cysteine 156, cysteine 159, cysteine 173, cysteine 176, cysteine 195, cysteine 198, cysteine 209, and cysteine 212. 4 CXXCXGXG motif repeats span residues 156 to 163, 173 to 180, 195 to 202, and 209 to 216; these read CEVCTGTG, CPTCQGHG, CPTCHGRG, and CTNCHGAG.

It belongs to the DnaJ family. Homodimer. Zn(2+) serves as cofactor.

Its subcellular location is the cytoplasm. Its function is as follows. Participates actively in the response to hyperosmotic and heat shock by preventing the aggregation of stress-denatured proteins and by disaggregating proteins, also in an autonomous, DnaK-independent fashion. Unfolded proteins bind initially to DnaJ; upon interaction with the DnaJ-bound protein, DnaK hydrolyzes its bound ATP, resulting in the formation of a stable complex. GrpE releases ADP from DnaK; ATP binding to DnaK triggers the release of the substrate protein, thus completing the reaction cycle. Several rounds of ATP-dependent interactions between DnaJ, DnaK and GrpE are required for fully efficient folding. Also involved, together with DnaK and GrpE, in the DNA replication of plasmids through activation of initiation proteins. In Parvibaculum lavamentivorans (strain DS-1 / DSM 13023 / NCIMB 13966), this protein is Chaperone protein DnaJ.